The primary structure comprises 346 residues: WD repeat-containing protein LWD1 (346 aa).

Methionine 1 bears the N-acetylmethionine mark. WD repeat units lie at residues 79–121 (EHPY…SRVE), 133–173 (EFCG…VDTQ), 176–214 (AHDK…HSTI), and 265–305 (RHQA…QHVE).

It is found in the nucleus. Functionally, clock protein essential for the proper expression phase and period length of both the oscillator and output genes known to participate in photoperiod sensing. Required for the expression of APRR9, APRR7, and APRR5. Regulated by APRR9 and APRR7 at the transcriptional level, indicating the existence of a positive feedback loop within the circadian clock. May function to delay the expression of the morning genes until dawn approaches. The chain is WD repeat-containing protein LWD1 (LWD1) from Arabidopsis thaliana (Mouse-ear cress).